Here is a 411-residue protein sequence, read N- to C-terminus: Cytosolic Fe-S cluster assembly factor narfl (411 aa).

Cys11, Cys124, Cys180, Cys329, and Cys333 together coordinate [4Fe-4S] cluster.

The protein belongs to the NARF family. Component of the CIA complex.

Component of the cytosolic iron-sulfur protein assembly (CIA) complex, a multiprotein complex that mediates the incorporation of iron-sulfur cluster into extramitochondrial Fe/S proteins. This is Cytosolic Fe-S cluster assembly factor narfl (narfl) from Danio rerio (Zebrafish).